A 212-amino-acid chain; its full sequence is Large ribosomal subunit protein uL4 (212 aa).

Residues 54-65 (SQKSRSDVSGSN) are compositionally biased toward polar residues. Residues 54–85 (SQKSRSDVSGSNKKPWRQKGTGRARSGSVKSP) are disordered.

This sequence belongs to the universal ribosomal protein uL4 family. As to quaternary structure, part of the 50S ribosomal subunit.

Functionally, one of the primary rRNA binding proteins, this protein initially binds near the 5'-end of the 23S rRNA. It is important during the early stages of 50S assembly. It makes multiple contacts with different domains of the 23S rRNA in the assembled 50S subunit and ribosome. Forms part of the polypeptide exit tunnel. The polypeptide is Large ribosomal subunit protein uL4 (Blochmanniella floridana).